Reading from the N-terminus, the 87-residue chain is Exodeoxyribonuclease 7 small subunit (87 aa).

It belongs to the XseB family. As to quaternary structure, heterooligomer composed of large and small subunits.

It localises to the cytoplasm. The catalysed reaction is Exonucleolytic cleavage in either 5'- to 3'- or 3'- to 5'-direction to yield nucleoside 5'-phosphates.. In terms of biological role, bidirectionally degrades single-stranded DNA into large acid-insoluble oligonucleotides, which are then degraded further into small acid-soluble oligonucleotides. The polypeptide is Exodeoxyribonuclease 7 small subunit (Serratia proteamaculans (strain 568)).